We begin with the raw amino-acid sequence, 382 residues long: 1-deoxy-D-xylulose 5-phosphate reductoisomerase (382 aa).

6 residues coordinate NADPH: Thr-10, Gly-11, Ser-12, Ile-13, Asn-38, and Asn-120. Lys-121 provides a ligand contact to 1-deoxy-D-xylulose 5-phosphate. NADPH is bound at residue Glu-122. Residue Asp-146 coordinates Mn(2+). 4 residues coordinate 1-deoxy-D-xylulose 5-phosphate: Ser-147, Glu-148, Ser-172, and His-195. Glu-148 is a Mn(2+) binding site. An NADPH-binding site is contributed by Gly-201. Residues Ser-208, Asn-213, Lys-214, and Glu-217 each contribute to the 1-deoxy-D-xylulose 5-phosphate site. Glu-217 is a binding site for Mn(2+).

This sequence belongs to the DXR family. It depends on Mg(2+) as a cofactor. Mn(2+) is required as a cofactor.

The catalysed reaction is 2-C-methyl-D-erythritol 4-phosphate + NADP(+) = 1-deoxy-D-xylulose 5-phosphate + NADPH + H(+). It functions in the pathway isoprenoid biosynthesis; isopentenyl diphosphate biosynthesis via DXP pathway; isopentenyl diphosphate from 1-deoxy-D-xylulose 5-phosphate: step 1/6. Functionally, catalyzes the NADPH-dependent rearrangement and reduction of 1-deoxy-D-xylulose-5-phosphate (DXP) to 2-C-methyl-D-erythritol 4-phosphate (MEP). The polypeptide is 1-deoxy-D-xylulose 5-phosphate reductoisomerase (Caldanaerobacter subterraneus subsp. tengcongensis (strain DSM 15242 / JCM 11007 / NBRC 100824 / MB4) (Thermoanaerobacter tengcongensis)).